The primary structure comprises 183 residues: Photosystem I assembly protein Ycf3 (183 aa).

3 TPR repeats span residues 35-68 (AFIY…EIDS), 72-105 (SYIL…NSFL), and 120-153 (GEQA…SPDN).

This sequence belongs to the Ycf3 family.

Its subcellular location is the plastid. It localises to the chloroplast thylakoid membrane. Functionally, essential for the assembly of the photosystem I (PSI) complex. May act as a chaperone-like factor to guide the assembly of the PSI subunits. The protein is Photosystem I assembly protein Ycf3 of Adiantum capillus-veneris (Maidenhair fern).